Here is a 278-residue protein sequence, read N- to C-terminus: Biotin synthase (278 aa).

The 227-residue stretch at 1–227 folds into the Radical SAM core domain; the sequence is MQIMLCAISN…NAHIMVAGGR (227 aa). Positions 16, 20, and 23 each coordinate [4Fe-4S] cluster. Residues Cys60, Cys95, and Cys153 each contribute to the [2Fe-2S] cluster site.

The protein belongs to the radical SAM superfamily. Biotin synthase family. As to quaternary structure, homodimer. [4Fe-4S] cluster is required as a cofactor. [2Fe-2S] cluster serves as cofactor.

The catalysed reaction is (4R,5S)-dethiobiotin + (sulfur carrier)-SH + 2 reduced [2Fe-2S]-[ferredoxin] + 2 S-adenosyl-L-methionine = (sulfur carrier)-H + biotin + 2 5'-deoxyadenosine + 2 L-methionine + 2 oxidized [2Fe-2S]-[ferredoxin]. It participates in cofactor biosynthesis; biotin biosynthesis; biotin from 7,8-diaminononanoate: step 2/2. Catalyzes the conversion of dethiobiotin (DTB) to biotin by the insertion of a sulfur atom into dethiobiotin via a radical-based mechanism. This Campylobacter lari (strain RM2100 / D67 / ATCC BAA-1060) protein is Biotin synthase.